The primary structure comprises 506 residues: Histidine ammonia-lyase (506 aa).

The 5-imidazolinone (Ala-Gly) cross-link spans 143–145 (ASG). Ser-144 bears the 2,3-didehydroalanine (Ser) mark.

The protein belongs to the PAL/histidase family. In terms of processing, contains an active site 4-methylidene-imidazol-5-one (MIO), which is formed autocatalytically by cyclization and dehydration of residues Ala-Ser-Gly.

The protein resides in the cytoplasm. The catalysed reaction is L-histidine = trans-urocanate + NH4(+). It functions in the pathway amino-acid degradation; L-histidine degradation into L-glutamate; N-formimidoyl-L-glutamate from L-histidine: step 1/3. This is Histidine ammonia-lyase from Salmonella arizonae (strain ATCC BAA-731 / CDC346-86 / RSK2980).